The chain runs to 223 residues: Ribose-5-phosphate isomerase A (223 aa).

Substrate-binding positions include 28-31 (TGST), 81-84 (DGAD), and 94-97 (KGGG). The active-site Proton acceptor is Glu103. A substrate-binding site is contributed by Lys121.

This sequence belongs to the ribose 5-phosphate isomerase family. Homodimer.

It carries out the reaction aldehydo-D-ribose 5-phosphate = D-ribulose 5-phosphate. The protein operates within carbohydrate degradation; pentose phosphate pathway; D-ribose 5-phosphate from D-ribulose 5-phosphate (non-oxidative stage): step 1/1. In terms of biological role, catalyzes the reversible conversion of ribose-5-phosphate to ribulose 5-phosphate. The sequence is that of Ribose-5-phosphate isomerase A from Janthinobacterium sp. (strain Marseille) (Minibacterium massiliensis).